A 117-amino-acid polypeptide reads, in one-letter code: G antigen 13 (117 aa).

Positions 1-117 (MSWRGRSTYY…PEEGEKQSQC (117 aa)) are disordered. Acidic residues-rich tracts occupy residues 32-45 (FSDEVEPATPEEGE) and 87-96 (ECEDGPDGQE). A compositionally biased stretch (basic and acidic residues) spans 103–117 (EEVKTPEEGEKQSQC).

It belongs to the GAGE family.

The protein is G antigen 13 of Homo sapiens (Human).